Reading from the N-terminus, the 131-residue chain is Monothiol glutaredoxin-S6 (131 aa).

One can recognise a Glutaredoxin domain in the interval 31–131; sequence SAFVQNAIYS…KLLGNSQSQR (101 aa). C51 serves as a coordination point for [2Fe-2S] cluster.

It belongs to the glutaredoxin family. CPYC subfamily.

It is found in the cytoplasm. Functionally, may only reduce GSH-thiol disulfides, but not protein disulfides. The sequence is that of Monothiol glutaredoxin-S6 (GRXS6) from Oryza sativa subsp. japonica (Rice).